Here is a 350-residue protein sequence, read N- to C-terminus: GTPase Obg (350 aa).

The Obg domain maps to 1–159 (MKFIDEAKIT…WELALELKVL (159 aa)). Residues 17 to 43 (GDGSASFRREKYIPKGGPDGGDGGRGG) form a disordered region. Gly residues predominate over residues 33–43 (GPDGGDGGRGG). Residues 160-334 (ADVGLLGMPN…LTYAVMDYLG (175 aa)) enclose the OBG-type G domain. GTP-binding positions include 166-173 (GMPNAGKS), 191-195 (FTTLA), 213-216 (DIPG), 284-287 (NKLD), and 315-317 (SAL). Positions 173 and 193 each coordinate Mg(2+).

The protein belongs to the TRAFAC class OBG-HflX-like GTPase superfamily. OBG GTPase family. As to quaternary structure, monomer. It depends on Mg(2+) as a cofactor.

The protein localises to the cytoplasm. An essential GTPase which binds GTP, GDP and possibly (p)ppGpp with moderate affinity, with high nucleotide exchange rates and a fairly low GTP hydrolysis rate. Plays a role in control of the cell cycle, stress response, ribosome biogenesis and in those bacteria that undergo differentiation, in morphogenesis control. In Thiobacillus denitrificans (strain ATCC 25259 / T1), this protein is GTPase Obg.